The sequence spans 459 residues: MAVSLWQQCIGRLQDELSAQQFSMWIRPLQAEMDGETLVLYAPNRFVLDWVRDKYLNTINQFFTEQMGSDAPKLRFDIGSRPASKPAAPAASTKSPVAPAAKSPSKPSFNSNEPAATANHRSNMNPTYQFDNFVEGKSNQLGKAAALQVSENPGGAYNPLFLYGGTGLGKTHLLHAVGNGIIKNNPNAKVVYMHSERFVQDMVKALQNNAIEEFKRYYRSVDALFIDDIQFFANKDRSQEEFFHTFNALLEGNHQVILTSDRYPKEIDGVEDRLKSRFGWGLTVAIEPPELETRVAILMRKAQESGINLPDEVAFFIAKRLRSNVRELEGALNRVIANANFTGRPITIDFVREALRDLLALQEKLVTIDNIQKTVAEYYKIKMADMLSKRRSRSVARPRQMAMALSKELTNQSLPEIGDAFGGRDHTTVLHACRKIAQLREESHDIKEDYANLIRTLSS.

The segment at 1-90 (MAVSLWQQCI…RPASKPAAPA (90 aa)) is domain I, interacts with DnaA modulators. The disordered stretch occupies residues 75 to 124 (RFDIGSRPASKPAAPAASTKSPVAPAAKSPSKPSFNSNEPAATANHRSNM). The span at 80-108 (SRPASKPAAPAASTKSPVAPAAKSPSKPS) shows a compositional bias: low complexity. Residues 91–122 (ASTKSPVAPAAKSPSKPSFNSNEPAATANHRS) are domain II. The span at 109 to 124 (FNSNEPAATANHRSNM) shows a compositional bias: polar residues. A domain III, AAA+ region region spans residues 123–339 (NMNPTYQFDN…GALNRVIANA (217 aa)). Gly-167, Gly-169, Lys-170, and Thr-171 together coordinate ATP. Residues 340-459 (NFTGRPITID…YANLIRTLSS (120 aa)) form a domain IV, binds dsDNA region.

The protein belongs to the DnaA family. In terms of assembly, oligomerizes as a right-handed, spiral filament on DNA at oriC.

It is found in the cytoplasm. Its function is as follows. Plays an essential role in the initiation and regulation of chromosomal replication. ATP-DnaA binds to the origin of replication (oriC) to initiate formation of the DNA replication initiation complex once per cell cycle. Binds the DnaA box (a 9 base pair repeat at the origin) and separates the double-stranded (ds)DNA. Forms a right-handed helical filament on oriC DNA; dsDNA binds to the exterior of the filament while single-stranded (ss)DNA is stabiized in the filament's interior. The ATP-DnaA-oriC complex binds and stabilizes one strand of the AT-rich DNA unwinding element (DUE), permitting loading of DNA polymerase. After initiation quickly degrades to an ADP-DnaA complex that is not apt for DNA replication. Binds acidic phospholipids. The chain is Chromosomal replication initiator protein DnaA from Shewanella loihica (strain ATCC BAA-1088 / PV-4).